The sequence spans 760 residues: 5-methyltetrahydropteroyltriglutamate--homocysteine methyltransferase (760 aa).

Residues 24–27 and K118 each bind 5-methyltetrahydropteroyltri-L-glutamate; that span reads RELK. Residues 437–439 and E490 contribute to the L-homocysteine site; that span reads IGS. L-methionine is bound by residues 437–439 and E490; that span reads IGS. Residues 521 to 522 and W567 contribute to the 5-methyltetrahydropteroyltri-L-glutamate site; that span reads RC. Position 605 (D605) interacts with L-homocysteine. Residue D605 participates in L-methionine binding. Residue E611 coordinates 5-methyltetrahydropteroyltri-L-glutamate. 3 residues coordinate Zn(2+): H647, C649, and E671. H700 (proton donor) is an active-site residue. C732 contributes to the Zn(2+) binding site.

The protein belongs to the vitamin-B12 independent methionine synthase family. Requires Zn(2+) as cofactor.

It catalyses the reaction 5-methyltetrahydropteroyltri-L-glutamate + L-homocysteine = tetrahydropteroyltri-L-glutamate + L-methionine. The protein operates within amino-acid biosynthesis; L-methionine biosynthesis via de novo pathway; L-methionine from L-homocysteine (MetE route): step 1/1. Its function is as follows. Catalyzes the transfer of a methyl group from 5-methyltetrahydrofolate to homocysteine resulting in methionine formation. The chain is 5-methyltetrahydropteroyltriglutamate--homocysteine methyltransferase from Mycobacterium leprae (strain TN).